Consider the following 228-residue polypeptide: Endonuclease V (228 aa).

Residues Asp-43 and Asp-109 each contribute to the Mg(2+) site.

The protein belongs to the endonuclease V family. Mg(2+) serves as cofactor.

It localises to the cytoplasm. It carries out the reaction Endonucleolytic cleavage at apurinic or apyrimidinic sites to products with a 5'-phosphate.. DNA repair enzyme involved in the repair of deaminated bases. Selectively cleaves double-stranded DNA at the second phosphodiester bond 3' to a deoxyinosine leaving behind the intact lesion on the nicked DNA. This chain is Endonuclease V, found in Dictyoglomus thermophilum (strain ATCC 35947 / DSM 3960 / H-6-12).